Reading from the N-terminus, the 590-residue chain is Aspartate--tRNA ligase (590 aa).

Glu180 is an L-aspartate binding site. The interval 204 to 207 is aspartate; that stretch reads QLFK. Arg226 lines the L-aspartate pocket. ATP is bound by residues 226–228 and Gln235; that span reads RDE. L-aspartate is bound at residue His454. Glu488 is an ATP binding site. L-aspartate is bound at residue Arg495. ATP is bound at residue 540 to 543; sequence GFDR.

The protein belongs to the class-II aminoacyl-tRNA synthetase family. Type 1 subfamily. As to quaternary structure, homodimer.

It is found in the cytoplasm. It catalyses the reaction tRNA(Asp) + L-aspartate + ATP = L-aspartyl-tRNA(Asp) + AMP + diphosphate. In terms of biological role, catalyzes the attachment of L-aspartate to tRNA(Asp) in a two-step reaction: L-aspartate is first activated by ATP to form Asp-AMP and then transferred to the acceptor end of tRNA(Asp). This is Aspartate--tRNA ligase from Clostridium kluyveri (strain NBRC 12016).